We begin with the raw amino-acid sequence, 427 residues long: tRNA(Ile)-lysidine synthase (427 aa).

Residue 27-32 coordinates ATP; it reads SGGVDS.

It belongs to the tRNA(Ile)-lysidine synthase family.

Its subcellular location is the cytoplasm. The enzyme catalyses cytidine(34) in tRNA(Ile2) + L-lysine + ATP = lysidine(34) in tRNA(Ile2) + AMP + diphosphate + H(+). Ligates lysine onto the cytidine present at position 34 of the AUA codon-specific tRNA(Ile) that contains the anticodon CAU, in an ATP-dependent manner. Cytidine is converted to lysidine, thus changing the amino acid specificity of the tRNA from methionine to isoleucine. This is tRNA(Ile)-lysidine synthase from Streptococcus equi subsp. zooepidemicus (strain H70).